The primary structure comprises 1060 residues: Carbamoyl phosphate synthase large chain (1060 aa).

The interval 1–401 (MPKRTDIRKI…SLLKAVRSLE (401 aa)) is carboxyphosphate synthetic domain. Arg129, Arg169, Gly175, Gly176, Gln208, Ile210, Glu215, Gly241, Ile242, His243, Gln284, and Glu298 together coordinate ATP. Positions 133–327 (KNLMNQLNEP…IAKMAAKIAV (195 aa)) constitute an ATP-grasp 1 domain. Mg(2+) is bound by residues Gln284, Glu298, and Asn300. 3 residues coordinate Mn(2+): Gln284, Glu298, and Asn300. Residues 402–546 (IGTAHLELDG…YTTYEQENES (145 aa)) form an oligomerization domain region. A carbamoyl phosphate synthetic domain region spans residues 547–929 (LVSAKPSILV…ALYKAFEASG (383 aa)). Positions 671–861 (DQLIQELNIP…MAQLATQLIL (191 aa)) constitute an ATP-grasp 2 domain. Residues Arg707, Arg746, Leu748, Glu752, Gly777, Val778, His779, Ser780, Gln820, and Glu832 each coordinate ATP. Positions 820, 832, and 834 each coordinate Mg(2+). Residues Gln820, Glu832, and Asn834 each contribute to the Mn(2+) site. The 131-residue stretch at 930–1060 (MHLPSHGNVL…ESQSLLTKPL (131 aa)) folds into the MGS-like domain. An allosteric domain region spans residues 930–1060 (MHLPSHGNVL…ESQSLLTKPL (131 aa)).

It belongs to the CarB family. Composed of two chains; the small (or glutamine) chain promotes the hydrolysis of glutamine to ammonia, which is used by the large (or ammonia) chain to synthesize carbamoyl phosphate. Tetramer of heterodimers (alpha,beta)4. Mg(2+) is required as a cofactor. It depends on Mn(2+) as a cofactor.

It catalyses the reaction hydrogencarbonate + L-glutamine + 2 ATP + H2O = carbamoyl phosphate + L-glutamate + 2 ADP + phosphate + 2 H(+). The enzyme catalyses hydrogencarbonate + NH4(+) + 2 ATP = carbamoyl phosphate + 2 ADP + phosphate + 2 H(+). It participates in amino-acid biosynthesis; L-arginine biosynthesis; carbamoyl phosphate from bicarbonate: step 1/1. The protein operates within pyrimidine metabolism; UMP biosynthesis via de novo pathway; (S)-dihydroorotate from bicarbonate: step 1/3. Its function is as follows. Large subunit of the glutamine-dependent carbamoyl phosphate synthetase (CPSase). CPSase catalyzes the formation of carbamoyl phosphate from the ammonia moiety of glutamine, carbonate, and phosphate donated by ATP, constituting the first step of 2 biosynthetic pathways, one leading to arginine and/or urea and the other to pyrimidine nucleotides. The large subunit (synthetase) binds the substrates ammonia (free or transferred from glutamine from the small subunit), hydrogencarbonate and ATP and carries out an ATP-coupled ligase reaction, activating hydrogencarbonate by forming carboxy phosphate which reacts with ammonia to form carbamoyl phosphate. The sequence is that of Carbamoyl phosphate synthase large chain from Latilactobacillus sakei subsp. sakei (strain 23K) (Lactobacillus sakei subsp. sakei).